We begin with the raw amino-acid sequence, 63 residues long: UPF0391 membrane protein lpg2415 (63 aa).

2 consecutive transmembrane segments (helical) span residues 4–24 (WALI…RGVA) and 33–53 (VLFF…LLGG).

The protein belongs to the UPF0391 family.

It is found in the cell membrane. The protein is UPF0391 membrane protein lpg2415 of Legionella pneumophila subsp. pneumophila (strain Philadelphia 1 / ATCC 33152 / DSM 7513).